The primary structure comprises 547 residues: TBCC domain-containing protein 1 (547 aa).

The region spanning 304–435 (PHTHRMVVMS…LEDHMAHTGL (132 aa)) is the C-CAP/cofactor C-like domain.

It belongs to the TBCC family.

Its subcellular location is the cytoplasm. The protein resides in the cytoskeleton. It is found in the microtubule organizing center. The protein localises to the centrosome. It localises to the spindle pole. In terms of biological role, may play a role in the regulation of centrosome and Golgi apparatus positioning. The protein is TBCC domain-containing protein 1 (tbccd1) of Xenopus tropicalis (Western clawed frog).